The following is a 1241-amino-acid chain: DNA-directed RNA polymerase subunit beta (1241 aa).

A disordered region spans residues 1201–1224 (AEEEQDTDVDYITEDDFESPDPEI).

The protein belongs to the RNA polymerase beta chain family. The RNAP catalytic core consists of 2 alpha, 1 beta, 1 beta' and 1 omega subunit. When a sigma factor is associated with the core the holoenzyme is formed, which can initiate transcription.

The enzyme catalyses RNA(n) + a ribonucleoside 5'-triphosphate = RNA(n+1) + diphosphate. DNA-dependent RNA polymerase catalyzes the transcription of DNA into RNA using the four ribonucleoside triphosphates as substrates. In Alkaliphilus oremlandii (strain OhILAs) (Clostridium oremlandii (strain OhILAs)), this protein is DNA-directed RNA polymerase subunit beta.